The primary structure comprises 171 residues: Small ribosomal subunit protein uS5 (171 aa).

In terms of domain architecture, S5 DRBM spans 16-79; the sequence is LVERLVTVDR…EAAKRNMITV (64 aa).

This sequence belongs to the universal ribosomal protein uS5 family. Part of the 30S ribosomal subunit. Contacts proteins S4 and S8.

Functionally, with S4 and S12 plays an important role in translational accuracy. In terms of biological role, located at the back of the 30S subunit body where it stabilizes the conformation of the head with respect to the body. The protein is Small ribosomal subunit protein uS5 of Psychrobacter arcticus (strain DSM 17307 / VKM B-2377 / 273-4).